We begin with the raw amino-acid sequence, 317 residues long: UV DNA damage endonuclease (317 aa).

Belongs to the uve1/UvsE family.

In terms of biological role, component in a DNA repair pathway. Removal of UV LIGHT damaged nucleotides. Recognizes pyrimidine dimers and cleave a phosphodiester bond immediately 5' to the lesion. In Bacillus cereus (strain G9842), this protein is UV DNA damage endonuclease.